The primary structure comprises 52 residues: DNA-directed RNA polymerase subunit Rpo12 (52 aa).

Zn(2+) contacts are provided by Cys-13, Cys-30, and Cys-33.

The protein belongs to the archaeal Rpo12/eukaryotic RPC10 RNA polymerase subunit family. Part of the RNA polymerase complex. It depends on Zn(2+) as a cofactor.

It is found in the cytoplasm. The catalysed reaction is RNA(n) + a ribonucleoside 5'-triphosphate = RNA(n+1) + diphosphate. Its function is as follows. DNA-dependent RNA polymerase (RNAP) catalyzes the transcription of DNA into RNA using the four ribonucleoside triphosphates as substrates. This Pyrobaculum arsenaticum (strain DSM 13514 / JCM 11321 / PZ6) protein is DNA-directed RNA polymerase subunit Rpo12.